Reading from the N-terminus, the 622-residue chain is Phosphoribomutase (622 aa).

Substrate-binding positions include Thr57, Arg61, 158 to 159 (SH), and Lys168. Ser158 serves as the catalytic Phosphoserine intermediate. Ser158 lines the Mg(2+) pocket. Position 158 is a phosphoserine (Ser158). Residues Asp325, Asp327, and Asp329 each contribute to the Mg(2+) site. Substrate-binding positions include 329 to 330 (DR), Thr404, 428 to 430 (EEA), and Lys442.

It belongs to the phosphohexose mutase family. Mg(2+) serves as cofactor.

Its subcellular location is the cytoplasm. The protein localises to the nucleus. The catalysed reaction is alpha-D-ribose 1-phosphate = D-ribose 5-phosphate. In terms of biological role, major phosphoribomutase that converts ribose 1-phosphate to ribose 5-phosphate. Involved in ribose salvage via the pentose phosphate pathway. This is Phosphoribomutase from Saccharomyces cerevisiae (strain ATCC 204508 / S288c) (Baker's yeast).